A 420-amino-acid chain; its full sequence is MTKWKRANPNGTRDYLFEECTLIEEVEQKLRRTFLERGYEEIRTPTIEFYDVFAFQSRPIDEEKMYKFFDEKGRIIVLRPDMTIPLARVVGTQRCDTPLKVTYSGNVFRANESLAGKYNEIVQSGIEVIGIDNVRAEIECVISVIQSLQKLRVQSFTIEIGQVQLYKCIVKKLSIHEEEEKFLRTYIESKNYASLSNFIRDKKLDRCDETVKLLEKLPRLFGNLEVIEEAEKLASSNEMKMAITRVKEIYEAIEKLGYGSYISIDLGTIQHLDYYTGVIFKGYIYEIGEEIVSGGRYDELIGNFGEMLPAVGLAVQVNQIVKALQEQQEPYERKRIDIMIHYELNRLAEAERLRNLLQKDGKKVALSLFSNLNDTFQFARKNQIVTVVEAKSESLVEYVWKEKWVVQKEGETSCVTFKLR.

It belongs to the class-II aminoacyl-tRNA synthetase family. HisZ subfamily. In terms of assembly, heteromultimer composed of HisG and HisZ subunits.

Its subcellular location is the cytoplasm. It participates in amino-acid biosynthesis; L-histidine biosynthesis; L-histidine from 5-phospho-alpha-D-ribose 1-diphosphate: step 1/9. Functionally, required for the first step of histidine biosynthesis. May allow the feedback regulation of ATP phosphoribosyltransferase activity by histidine. This Bacillus anthracis (strain A0248) protein is ATP phosphoribosyltransferase regulatory subunit.